A 343-amino-acid chain; its full sequence is Zinc finger CCCH domain-containing protein 1 (343 aa).

Positions 1 to 102 (MSDSGEPKPS…PERSVFHYDS (102 aa)) are disordered. Low complexity predominate over residues 7–25 (PKPSQQEEPLPQPAAQETQ). The span at 35 to 44 (KPTKSKNIRK) shows a compositional bias: basic residues. Low complexity predominate over residues 79–91 (SSGPSKSSTTTSG). A C3H1-type zinc finger spans residues 200–228 (DYQPDICKDYKETGYCGYGDSCKFLHDRG). The interval 249 to 268 (RNKAMGVEDEDDEADKDSDE) is disordered. Positions 255 to 268 (VEDEDDEADKDSDE) are enriched in acidic residues. Residues 277–315 (CFICREPFVDPVVTKCKHYFCEHCALKHHTKNKKCFVCN) form an RING-type zinc finger.

In Arabidopsis thaliana (Mouse-ear cress), this protein is Zinc finger CCCH domain-containing protein 1.